Consider the following 149-residue polypeptide: Large ribosomal subunit protein uL13 (149 aa).

This sequence belongs to the universal ribosomal protein uL13 family. Part of the 50S ribosomal subunit.

Its function is as follows. This protein is one of the early assembly proteins of the 50S ribosomal subunit, although it is not seen to bind rRNA by itself. It is important during the early stages of 50S assembly. The chain is Large ribosomal subunit protein uL13 from Gemmatimonas aurantiaca (strain DSM 14586 / JCM 11422 / NBRC 100505 / T-27).